We begin with the raw amino-acid sequence, 131 residues long: Large ribosomal subunit protein bL19 (131 aa).

This sequence belongs to the bacterial ribosomal protein bL19 family.

Functionally, this protein is located at the 30S-50S ribosomal subunit interface and may play a role in the structure and function of the aminoacyl-tRNA binding site. The polypeptide is Large ribosomal subunit protein bL19 (Anaeromyxobacter dehalogenans (strain 2CP-C)).